The chain runs to 485 residues: Aspartyl/glutamyl-tRNA(Asn/Gln) amidotransferase subunit B (485 aa).

This sequence belongs to the GatB/GatE family. GatB subfamily. As to quaternary structure, heterotrimer of A, B and C subunits.

The enzyme catalyses L-glutamyl-tRNA(Gln) + L-glutamine + ATP + H2O = L-glutaminyl-tRNA(Gln) + L-glutamate + ADP + phosphate + H(+). It catalyses the reaction L-aspartyl-tRNA(Asn) + L-glutamine + ATP + H2O = L-asparaginyl-tRNA(Asn) + L-glutamate + ADP + phosphate + 2 H(+). Allows the formation of correctly charged Asn-tRNA(Asn) or Gln-tRNA(Gln) through the transamidation of misacylated Asp-tRNA(Asn) or Glu-tRNA(Gln) in organisms which lack either or both of asparaginyl-tRNA or glutaminyl-tRNA synthetases. The reaction takes place in the presence of glutamine and ATP through an activated phospho-Asp-tRNA(Asn) or phospho-Glu-tRNA(Gln). This Borrelia hermsii (strain HS1 / DAH) protein is Aspartyl/glutamyl-tRNA(Asn/Gln) amidotransferase subunit B.